Reading from the N-terminus, the 159-residue chain is Siroheme decarboxylase beta subunit (159 aa).

Substrate is bound at residue 152–157 (KTSMTY).

This sequence belongs to the Ahb/Nir family. Forms a heterodimer composed of AhbA and AhbB.

It carries out the reaction siroheme + 2 H(+) = 12,18-didecarboxysiroheme + 2 CO2. It participates in porphyrin-containing compound metabolism; protoheme biosynthesis. Involved in siroheme-dependent heme b biosynthesis. Catalyzes the decarboxylation of siroheme into didecarboxysiroheme. Siroheme is decarboxylated to monodecarboxysiroheme, which is in turn decarboxylated to didecarboxysiroheme. This Desulfovibrio desulfuricans (strain ATCC 27774 / DSM 6949 / MB) protein is Siroheme decarboxylase beta subunit.